A 343-amino-acid chain; its full sequence is Growth arrest-specific protein 1 (343 aa).

The N-terminal stretch at 1-38 (MLAALLGGAGARTGTLPGALLCLMALLQLLCSAPRGSG) is a signal peptide. Asparagine 114 is a glycosylation site (N-linked (GlcNAc...) asparagine). A disordered region spans residues 268-317 (EQRAGAAGGEQPLDDDDGLARPGGGAAAAGGRGDLPHGPGRRSSSSGSGG). Positions 288-300 (RPGGGAAAAGGRG) are enriched in gly residues. Low complexity predominate over residues 303 to 313 (PHGPGRRSSSS). A lipid anchor (GPI-anchor amidated serine) is attached at serine 315. Residues 316-343 (GGHWANRSAWTPFACLLLLLLLLLGSHL) constitute a propeptide, removed in mature form. An N-linked (GlcNAc...) asparagine glycan is attached at asparagine 321.

Its subcellular location is the cell membrane. Its function is as follows. Specific growth arrest protein involved in growth suppression. Blocks entry to S phase. Prevents cycling of normal and transformed cells. Binds 20(S)-hydroxycholesterol (20(S)-OHC). This chain is Growth arrest-specific protein 1 (Gas1), found in Mus musculus (Mouse).